The sequence spans 428 residues: Nucleoside diphosphate phosphatase ENTPD5 (428 aa).

Positions Met1 to Arg24 are cleaved as a signal peptide. The active-site Proton acceptor is Glu172. A glycan (N-linked (GlcNAc...) asparagine) is linked at Asn232. Disulfide bonds link Cys272–Cys303 and Cys363–Cys377. N-linked (GlcNAc...) asparagine glycosylation occurs at Asn368.

The protein belongs to the GDA1/CD39 NTPase family. Monomer; active form. Homodimer; disulfide-linked. Homodimers are enzymatically inactive. It depends on Ca(2+) as a cofactor. Requires Mg(2+) as cofactor. N-glycosylated; high-mannose type. Glycosylation is not essential for enzymatic activity. Expressed in adult liver, kidney, prostate, testis and colon. Much weaker expression in other tissues.

The protein localises to the endoplasmic reticulum. The protein resides in the secreted. The enzyme catalyses a ribonucleoside 5'-diphosphate + H2O = a ribonucleoside 5'-phosphate + phosphate + H(+). The catalysed reaction is GDP + H2O = GMP + phosphate + H(+). It carries out the reaction UDP + H2O = UMP + phosphate + H(+). It catalyses the reaction IDP + H2O = IMP + phosphate + H(+). The enzyme catalyses CDP + H2O = CMP + phosphate + H(+). The catalysed reaction is ADP + H2O = AMP + phosphate + H(+). It functions in the pathway protein modification; protein glycosylation. In terms of biological role, hydrolyzes nucleoside diphosphates with a preference for GDP, IDP and UDP compared to ADP and CDP. In the lumen of the endoplasmic reticulum, hydrolyzes UDP that acts as an end-product feedback inhibitor of the UDP-Glc:glycoprotein glucosyltransferases. UMP can be transported back by an UDP-sugar antiporter to the cytosol where it is consumed to regenerate UDP-glucose. Therefore, it positively regulates protein reglucosylation by clearing UDP from the ER lumen and by promoting the regeneration of UDP-glucose. Protein reglucosylation is essential to proper glycoprotein folding and quality control in the ER. This Homo sapiens (Human) protein is Nucleoside diphosphate phosphatase ENTPD5.